We begin with the raw amino-acid sequence, 433 residues long: 23S rRNA (uracil(1939)-C(5))-methyltransferase RlmD (433 aa).

Residues 10 to 68 (RTTTRQIITVSVNDLDSFGQGVARHNGKTLFIPGLLPQENAEVTVTEDKKQYARAKVVR) enclose the TRAM domain. [4Fe-4S] cluster is bound by residues Cys-81, Cys-87, Cys-90, and Cys-162. S-adenosyl-L-methionine-binding residues include Gln-265, Phe-294, Asn-299, Glu-315, Asn-342, and Asp-363. The Nucleophile role is filled by Cys-389.

The protein belongs to the class I-like SAM-binding methyltransferase superfamily. RNA M5U methyltransferase family. RlmD subfamily.

The catalysed reaction is uridine(1939) in 23S rRNA + S-adenosyl-L-methionine = 5-methyluridine(1939) in 23S rRNA + S-adenosyl-L-homocysteine + H(+). Functionally, catalyzes the formation of 5-methyl-uridine at position 1939 (m5U1939) in 23S rRNA. This Escherichia coli O157:H7 protein is 23S rRNA (uracil(1939)-C(5))-methyltransferase RlmD.